The sequence spans 433 residues: Adenosylhomocysteinase A (433 aa).

Thr-57, Asp-132, Glu-157, Lys-187, and Asp-191 together coordinate substrate. The segment at 184-351 (SVTKSKFDNL…EGRLVNLGCA (168 aa)) is NAD binding.

The protein belongs to the adenosylhomocysteinase family. In terms of assembly, homotetramer. Requires NAD(+) as cofactor.

It localises to the cytoplasm. The catalysed reaction is S-adenosyl-L-homocysteine + H2O = L-homocysteine + adenosine. It participates in amino-acid biosynthesis; L-homocysteine biosynthesis; L-homocysteine from S-adenosyl-L-homocysteine: step 1/1. Catalyzes the hydrolysis of S-adenosyl-L-homocysteine to form adenosine and homocysteine. Binds copper ions. This is Adenosylhomocysteinase A (ahcy-a) from Xenopus laevis (African clawed frog).